We begin with the raw amino-acid sequence, 88 residues long: Large ribosomal subunit protein bL27 (88 aa).

A disordered region spans residues 1–20 (MASKKGVGSTKDGRDSIAKR).

It belongs to the bacterial ribosomal protein bL27 family.

The chain is Large ribosomal subunit protein bL27 (rpmA) from Geobacillus stearothermophilus (Bacillus stearothermophilus).